The following is a 211-amino-acid chain: Uracil phosphoribosyltransferase (211 aa).

5-phospho-alpha-D-ribose 1-diphosphate is bound by residues Arg78, Arg103, and 130-138 (DPMLATGGT). Uracil is bound by residues Ile195 and 200-202 (GDA). Asp201 lines the 5-phospho-alpha-D-ribose 1-diphosphate pocket.

It belongs to the UPRTase family. The cofactor is Mg(2+).

The enzyme catalyses UMP + diphosphate = 5-phospho-alpha-D-ribose 1-diphosphate + uracil. Its pathway is pyrimidine metabolism; UMP biosynthesis via salvage pathway; UMP from uracil: step 1/1. With respect to regulation, allosterically activated by GTP. Catalyzes the conversion of uracil and 5-phospho-alpha-D-ribose 1-diphosphate (PRPP) to UMP and diphosphate. The sequence is that of Uracil phosphoribosyltransferase from Pseudarthrobacter chlorophenolicus (strain ATCC 700700 / DSM 12829 / CIP 107037 / JCM 12360 / KCTC 9906 / NCIMB 13794 / A6) (Arthrobacter chlorophenolicus).